We begin with the raw amino-acid sequence, 420 residues long: Serine hydroxymethyltransferase (420 aa).

Residues leucine 121 and 125 to 127 (GHL) each bind (6S)-5,6,7,8-tetrahydrofolate. An N6-(pyridoxal phosphate)lysine modification is found at lysine 230. Residues glutamate 246 and 354 to 356 (SPF) each bind (6S)-5,6,7,8-tetrahydrofolate.

Belongs to the SHMT family. Homodimer. The cofactor is pyridoxal 5'-phosphate.

The protein resides in the cytoplasm. The enzyme catalyses (6R)-5,10-methylene-5,6,7,8-tetrahydrofolate + glycine + H2O = (6S)-5,6,7,8-tetrahydrofolate + L-serine. The protein operates within one-carbon metabolism; tetrahydrofolate interconversion. It functions in the pathway amino-acid biosynthesis; glycine biosynthesis; glycine from L-serine: step 1/1. Functionally, catalyzes the reversible interconversion of serine and glycine with tetrahydrofolate (THF) serving as the one-carbon carrier. This reaction serves as the major source of one-carbon groups required for the biosynthesis of purines, thymidylate, methionine, and other important biomolecules. Also exhibits THF-independent aldolase activity toward beta-hydroxyamino acids, producing glycine and aldehydes, via a retro-aldol mechanism. This chain is Serine hydroxymethyltransferase, found in Rickettsia canadensis (strain McKiel).